The following is a 737-amino-acid chain: Glycogen [starch] synthase, muscle (737 aa).

Ser8 is subject to Phosphoserine; by AMPK and PKA. Ser11 bears the Phosphoserine mark. Lys39 provides a ligand contact to UDP. Positions 205 and 211 each coordinate UDP-alpha-D-glucose. 5 residues coordinate alpha-D-glucose 6-phosphate: His291, Glu292, Gln294, His297, and Lys301. Residue Arg331 participates in UDP binding. Residue Arg331 participates in UDP-alpha-D-glucose binding. Residue Ser412 is modified to Phosphoserine. Residue His501 participates in alpha-D-glucose 6-phosphate binding. 3 residues coordinate UDP-alpha-D-glucose: Glu510, Trp512, and Gly513. Residue Thr515 coordinates UDP. Residues Arg582 and Arg586 each coordinate alpha-D-glucose 6-phosphate. The segment at 634 to 737 (YRYPRPASVP…PTSSLGEERN (104 aa)) is disordered. Phosphoserine occurs at positions 641, 645, 649, and 652. Ser653 bears the Phosphoserine; by GSK3-alpha and GSK3-beta mark. Ser657 bears the Phosphoserine; by CK2 mark. Over residues 658–681 (EDEEDPRNGPLEEDGERYDEDEEA) the composition is skewed to acidic residues. Positions 682–695 (AKDRRNIRAPEWPR) are enriched in basic and acidic residues. Ser698 bears the Phosphoserine mark. Residues 698-714 (SCTSSTSGSKRNSVDTA) are compositionally biased toward polar residues. Thr700 is subject to Phosphothreonine. Ser710 carries the phosphoserine modification. Residues 715–737 (TSSSLSTPSEPLSPTSSLGEERN) are compositionally biased toward low complexity. Thr721 carries the post-translational modification Phosphothreonine. A phosphoserine mark is found at Ser727 and Ser731.

This sequence belongs to the glycosyltransferase 3 family. Part of the GYS1-GYG1 complex, a heterooctamer composed of a tetramer of GYS1 and 2 dimers of GYG1, where each GYS1 protomer binds to one GYG1 subunit (via GYG1 C-terminus); the GYS1 tetramer may dissociate from GYG1 dimers to continue glycogen polymerization on its own. Phosphorylation at Ser-8 by AMPK inactivates the enzyme activity. Primed phosphorylation at Ser-657 (site 5) by CSNK2A1 and CSNK2A2 is required for inhibitory phosphorylation at Ser-641 (site 3a), Ser-645 (site 3b), Ser-649 (site 3c) and Ser-653 (site 4) by GSK3A an GSK3B. Phosphorylated at Ser-641 by DYRK2, leading to inactivation. Phosphorylated at Ser-641 by PASK, leading to inactivation; phosphorylation by PASK is inhibited by glycogen. Dephosphorylation at Ser-641 and Ser-645 by PP1 activates the enzyme. As to expression, expressed in skeletal muscle and most other cell types where glycogen is present.

The catalysed reaction is [(1-&gt;4)-alpha-D-glucosyl](n) + UDP-alpha-D-glucose = [(1-&gt;4)-alpha-D-glucosyl](n+1) + UDP + H(+). It functions in the pathway glycan biosynthesis; glycogen biosynthesis. Its activity is regulated as follows. Allosteric activation by glucose-6-phosphate. Phosphorylation reduces enzyme activity by constraining a tense conformation of the tetramer through inter-subunit interaction. Phosphorylation reduces the activity towards UDP-glucose. When in the non-phosphorylated state, glycogen synthase does not require glucose-6-phosphate as an allosteric activator; when phosphorylated it does. Functionally, glycogen synthase participates in the glycogen biosynthetic process along with glycogenin and glycogen branching enzyme. Extends the primer composed of a few glucose units formed by glycogenin by adding new glucose units to it. In this context, glycogen synthase transfers the glycosyl residue from UDP-Glc to the non-reducing end of alpha-1,4-glucan. The chain is Glycogen [starch] synthase, muscle from Homo sapiens (Human).